A 206-amino-acid polypeptide reads, in one-letter code: Small ribosomal subunit protein uS4A (206 aa).

The region spanning 98–164 (MRLDNVVYKL…EKFKTFAENP (67 aa)) is the S4 RNA-binding domain.

Belongs to the universal ribosomal protein uS4 family. As to quaternary structure, part of the 30S ribosomal subunit. Contacts protein S5. The interaction surface between S4 and S5 is involved in control of translational fidelity.

Its function is as follows. One of the primary rRNA binding proteins, it binds directly to 16S rRNA where it nucleates assembly of the body of the 30S subunit. With S5 and S12 plays an important role in translational accuracy. This chain is Small ribosomal subunit protein uS4A, found in Clostridium novyi (strain NT).